Consider the following 169-residue polypeptide: Probable chorismate pyruvate-lyase (169 aa).

Substrate-binding residues include R71, I110, and E150.

The protein belongs to the UbiC family.

It localises to the cytoplasm. The enzyme catalyses chorismate = 4-hydroxybenzoate + pyruvate. It participates in cofactor biosynthesis; ubiquinone biosynthesis. Its function is as follows. Removes the pyruvyl group from chorismate, with concomitant aromatization of the ring, to provide 4-hydroxybenzoate (4HB) for the ubiquinone pathway. This chain is Probable chorismate pyruvate-lyase, found in Acinetobacter baumannii (strain ATCC 17978 / DSM 105126 / CIP 53.77 / LMG 1025 / NCDC KC755 / 5377).